Reading from the N-terminus, the 325-residue chain is Formimidoylglutamase (325 aa).

Histidine 125, aspartate 155, histidine 157, aspartate 159, cysteine 246, and aspartate 248 together coordinate Mn(2+).

The protein belongs to the arginase family. The cofactor is Mn(2+).

It catalyses the reaction N-formimidoyl-L-glutamate + H2O = formamide + L-glutamate. It functions in the pathway amino-acid degradation; L-histidine degradation into L-glutamate; L-glutamate from N-formimidoyl-L-glutamate (hydrolase route): step 1/1. Its function is as follows. Catalyzes the conversion of N-formimidoyl-L-glutamate to L-glutamate and formamide. The polypeptide is Formimidoylglutamase (Ralstonia nicotianae (strain ATCC BAA-1114 / GMI1000) (Ralstonia solanacearum)).